We begin with the raw amino-acid sequence, 301 residues long: MAKPLTITSSHSHFSLAWRAYFEMTKPKVVALMLLTVLVGMCLAVPTAVPVQPLIAGMFGIALMAGSAAALNHLIDRRIDGMMARTYNRPLPKGRVSAKRALIFAASIGGLGFVVLYVLVNPLTAWLTFASLIGYALVYTAYLKRATSQNIVIGGLAGAMPPLLGWTAVTNQFHGHALLLVIIIFTWTPPHFWALAIHRRAEYAKVDIPMLPVTHGVEFTKTCILLYTVLLAIACLLPVLVGMCGPMYFVCSSLLSSVFIYKAWQLKYRDHDGLAMQVFRFSIYHLMLLFMALLIDHYLWS.

The next 9 membrane-spanning stretches (helical) occupy residues 29–49 (VVAL…PTAV), 51–71 (VQPL…AAAL), 101–121 (ALIF…VLVN), 123–143 (LTAW…TAYL), 150–170 (NIVI…TAVT), 177–197 (ALLL…ALAI), 223–243 (CILL…LVGM), 244–264 (CGPM…YKAW), and 281–301 (FSIY…YLWS).

The protein belongs to the UbiA prenyltransferase family. Protoheme IX farnesyltransferase subfamily.

It is found in the cell inner membrane. It catalyses the reaction heme b + (2E,6E)-farnesyl diphosphate + H2O = Fe(II)-heme o + diphosphate. It functions in the pathway porphyrin-containing compound metabolism; heme O biosynthesis; heme O from protoheme: step 1/1. Functionally, converts heme B (protoheme IX) to heme O by substitution of the vinyl group on carbon 2 of heme B porphyrin ring with a hydroxyethyl farnesyl side group. This Shewanella sp. (strain W3-18-1) protein is Protoheme IX farnesyltransferase 2.